We begin with the raw amino-acid sequence, 803 residues long: MADMSVKQLADLVRTTPERLLEQLKEAGVAITHVDQTISDEEKRKLLLHLKTSHSTETDKKRSKIVLKRKKLSVVKSGKKSVNVEIRSKRTYTKPVVEQKRETEPAPTQEVPLTSDTTNLNEKAEVNVATLEKAVEAEVKEEAKKTPSEKKETPKKGPRKETRRSRKPDKEDKWEREELHMTKLVEERRRRHKPAHVPDSDSASAKLEQGFARPTAPVVREVALPESITVADLAQKMSVKAAEVIKAMMKLGAMVTINQRIDQETAAIVVEEMGHKPKLIKEDVLEENLVATLGEQIGEAVPRAPVVTIMGHVDHGKTSLLDYIRRTKVTSTEAGGITQHIGAYHVETELGMITFLDTPGHEAFTAMRARGAKCTDIVVLVVAADDGVMPQTVEAIQHARAAKVPVVVAVNKIDKPEADPERIKTELSTHDVLPEEWGGDTMFQPISAKTGEGIDALLERILLQAEVLELKAVDNGPARGMVVESRLDRGRGPVATVLVTSGELHLGDILLVGREYGRVRAMIGDDGRPCESAGPSMPVEVLGLSGTPVAGEEAIVVPDERKAREIARFRQGKYREVRLAKKQTAHLERIFDRMGEGKQNTLNIVLKADVQGSLEALTEALNKLSTDEVKVNIIASGVGGITESDVNLAIASDAVVIGFNVRADAPTRVLVEREGVDLRYYSIIYDLIDEVKKALSGLLAPEFEEKIVGLAEVRDVFRSSKIGAIAGCMVVEGVVRRHLPIRVLRDNVVIYEGQLESLRRYKEDVAEVRQGTECGIGVKNYNDVKVGDQIEVYEKTQVHRTIA.

Disordered stretches follow at residues 95 to 125 (PVVEQKRETEPAPTQEVPLTSDTTNLNEKAE) and 138 to 209 (EVKE…KLEQ). Polar residues predominate over residues 111-121 (VPLTSDTTNLN). Basic and acidic residues predominate over residues 138–155 (EVKEEAKKTPSEKKETPK). The span at 156–167 (KGPRKETRRSRK) shows a compositional bias: basic residues. A compositionally biased stretch (basic and acidic residues) spans 168-188 (PDKEDKWEREELHMTKLVEER). The tr-type G domain occupies 302-471 (PRAPVVTIMG…LLQAEVLELK (170 aa)). Residues 311–318 (GHVDHGKT) are G1. 311-318 (GHVDHGKT) is a GTP binding site. The tract at residues 336–340 (GITQH) is G2. The segment at 357–360 (DTPG) is G3. GTP contacts are provided by residues 357-361 (DTPGH) and 411-414 (NKID). Residues 411–414 (NKID) form a G4 region. The tract at residues 447-449 (SAK) is G5.

It belongs to the TRAFAC class translation factor GTPase superfamily. Classic translation factor GTPase family. IF-2 subfamily.

It localises to the cytoplasm. Its function is as follows. One of the essential components for the initiation of protein synthesis. Protects formylmethionyl-tRNA from spontaneous hydrolysis and promotes its binding to the 30S ribosomal subunits. Also involved in the hydrolysis of GTP during the formation of the 70S ribosomal complex. The chain is Translation initiation factor IF-2 from Coxiella burnetii (strain CbuG_Q212) (Coxiella burnetii (strain Q212)).